The primary structure comprises 173 residues: tRNA-specific adenosine deaminase (173 aa).

In terms of domain architecture, CMP/dCMP-type deaminase spans 9–121 (EFDEKMMRYA…DYKTGAIGSR (113 aa)). H61 provides a ligand contact to Zn(2+). E63 functions as the Proton donor in the catalytic mechanism. Residues C91 and C94 each contribute to the Zn(2+) site.

Belongs to the cytidine and deoxycytidylate deaminase family. Homodimer. The cofactor is Zn(2+).

It carries out the reaction adenosine(34) in tRNA + H2O + H(+) = inosine(34) in tRNA + NH4(+). Functionally, catalyzes the deamination of adenosine to inosine at the wobble position 34 of tRNA(Arg2). This Haemophilus influenzae (strain ATCC 51907 / DSM 11121 / KW20 / Rd) protein is tRNA-specific adenosine deaminase.